The sequence spans 436 residues: MAKEDEEPGAHRGGSTCSRPQPGKGGRTAACCSRPKVAALIVGTLLFLTGIGAASWAIVTILLQSDQEPLYQVQLSPGDSRLAVFDKTEGTWRLLCSSRSNARVAGLGCEEMGFLRALAHSELDVRTAGANGTSGFFCVDEGGLPLAQRLLDVISVCDCPRGRFLTATCQDCGRRKLPVDRIVGGQDSSLGRWPWQVSLRYDGTHLCGGSLLSGDWVLTAAHCFPERNRVLSRWRVFAGAVARTSPHAVQLGVQAVIYHGGYLPFRDPTIDENSNDIALVHLSSSLPLTEYIQPVCLPAAGQALVDGKVCTVTGWGNTQFYGQQAMVLQEARVPIISNEVCNSPDFYGNQIKPKMFCAGYPEGGIDACQGDSGGPFVCEDSISGTSRWRLCGIVSWGTGCALARKPGVYTKVTDFREWIFKAIKTHSEASGMVTQP.

A disordered region spans residues 1 to 29 (MAKEDEEPGAHRGGSTCSRPQPGKGGRTA). The Cytoplasmic segment spans residues 1-38 (MAKEDEEPGAHRGGSTCSRPQPGKGGRTAACCSRPKVA). Residues 39–59 (ALIVGTLLFLTGIGAASWAIV) form a helical; Signal-anchor for type II membrane protein membrane-spanning segment. Residues 60–436 (TILLQSDQEP…SEASGMVTQP (377 aa)) lie on the Extracellular side of the membrane. Residues 73-170 (VQLSPGDSRL…RGRFLTATCQ (98 aa)) form the SRCR domain. Disulfide bonds link C96–C159, C109–C169, C138–C157, C172–C296, C207–C223, C310–C378, C341–C357, and C368–C400. N131 carries an N-linked (GlcNAc...) asparagine glycan. The 243-residue stretch at 182 to 424 (IVGGQDSSLG…FREWIFKAIK (243 aa)) folds into the Peptidase S1 domain. Catalysis depends on charge relay system residues H222 and D276. Catalysis depends on S372, which acts as the Charge relay system.

Belongs to the peptidase S1 family. Detected in kidney, in thick ascending tubule epithelial cells (at protein level). Detected in kidney and liver.

It is found in the apical cell membrane. The protein localises to the cell membrane. It localises to the secreted. The catalysed reaction is Cleavage after basic amino-acid residues, with Arg strongly preferred to Lys.. In terms of biological role, serine protease that cleaves extracellular substrates, and contributes to the proteolytic processing of growth factors, such as HGF and MST1/HGFL. Plays a role in cell growth and maintenance of cell morphology. Plays a role in the proteolytic processing of ACE2. Mediates the proteolytic cleavage of urinary UMOD that is required for UMOD polymerization. In Mus musculus (Mouse), this protein is Serine protease hepsin (Hpn).